Here is a 122-residue protein sequence, read N- to C-terminus: Basic phospholipase A2 LmTX-II (122 aa).

6 cysteine pairs are disulfide-bonded: Cys-26–Cys-115, Cys-28–Cys-44, Cys-43–Cys-95, Cys-49–Cys-122, Cys-50–Cys-88, and Cys-75–Cys-86. Residues Tyr-27, Gly-29, and Gly-31 each contribute to the Ca(2+) site. The active site involves His-47. Residue Asp-48 coordinates Ca(2+). Asp-89 is a catalytic residue.

Monomer. The cofactor is Ca(2+). Expressed by the venom gland.

Its subcellular location is the secreted. It catalyses the reaction a 1,2-diacyl-sn-glycero-3-phosphocholine + H2O = a 1-acyl-sn-glycero-3-phosphocholine + a fatty acid + H(+). Snake venom phospholipase A2 (PLA2) that may display neurotoxic and myotoxic activities. May induce inflammatory edema by mechanisms involving mast cell activation and arachidonic acid metabolites. May increase plasma creatine kinase activity. PLA2 catalyzes the calcium-dependent hydrolysis of the 2-acyl groups in 3-sn-phosphoglycerides. This chain is Basic phospholipase A2 LmTX-II, found in Lachesis muta muta (Bushmaster).